The chain runs to 281 residues: Phosphonates import ATP-binding protein PhnC (281 aa).

The region spanning 2-245 (FELKDVTRRF…AVKEIYGTDK (244 aa)) is the ABC transporter domain. An ATP-binding site is contributed by 34-41 (GRSGAGKS).

Belongs to the ABC transporter superfamily. Phosphonates importer (TC 3.A.1.9.1) family. The complex is composed of two ATP-binding proteins (PhnC), two transmembrane proteins (PhnE) and a solute-binding protein (PhnD).

The protein localises to the cell inner membrane. The enzyme catalyses phosphonate(out) + ATP + H2O = phosphonate(in) + ADP + phosphate + H(+). Its function is as follows. Part of the ABC transporter complex PhnCDE involved in phosphonates import. Responsible for energy coupling to the transport system. In Rhizobium etli (strain ATCC 51251 / DSM 11541 / JCM 21823 / NBRC 15573 / CFN 42), this protein is Phosphonates import ATP-binding protein PhnC.